A 479-amino-acid polypeptide reads, in one-letter code: MADFLTLSPEVNSARMYAGGGPGSLSAAAAAWDELAAELWLAAASFESVCSGLADRWWQGPSSRMMAAQAARHTGWLAAAATQAEGAASQAQTMALAYEAAFAATVHPALVAANRALVAWLAGSNVFGQNTPAIAAAEAIYEQMWAQDVVAMLNYHAVASAVGARLRPWQQLLHELPRRLGGEHSDSTNTELANPSSTTTRITVPGASPVHAATLLPFIGRLLAARYAELNTAIGTNWFPGTTPEVVSYPATIGVLSGSLGAVDANQSIAIGQQMLHNEILAATASGQPVTVAGLSMGSMVIDRELAYLAIDPNAPPSSALTFVELAGPERGLAQTYLPVGTTIPIAGYTVGNAPESQYNTSVVYSQYDIWADPPDRPWNLLAGANALMGAAYFHDLTAYAAPQQGIEIAAVTSSLGGTTTTYMIPSPTLPLLLPLKQIGVPDWIVGGLNNVLKPLVDAGYSQYAPTAGPYFSHGNLVW.

Positions 180 to 203 (LGGEHSDSTNTELANPSSTTTRIT) are disordered. The span at 187 to 202 (STNTELANPSSTTTRI) shows a compositional bias: polar residues. The 223-residue stretch at 240–462 (PGTTPEVVSY…LKPLVDAGYS (223 aa)) folds into the PE-PPE domain.

Belongs to the mycobacterial PPE family.

This is an uncharacterized protein from Mycobacterium tuberculosis (strain CDC 1551 / Oshkosh).